A 291-amino-acid polypeptide reads, in one-letter code: Lipoyl synthase, mitochondrial (291 aa).

The [4Fe-4S] cluster site is built by Cys-45, Cys-50, Cys-56, Cys-71, Cys-75, Cys-78, and Ser-283. In terms of domain architecture, Radical SAM core spans 57–272 (WGEGTATFMI…EKIGKELGFR (216 aa)).

This sequence belongs to the radical SAM superfamily. Lipoyl synthase family. [4Fe-4S] cluster serves as cofactor.

The protein resides in the mitochondrion. The enzyme catalyses [[Fe-S] cluster scaffold protein carrying a second [4Fe-4S](2+) cluster] + N(6)-octanoyl-L-lysyl-[protein] + 2 oxidized [2Fe-2S]-[ferredoxin] + 2 S-adenosyl-L-methionine + 4 H(+) = [[Fe-S] cluster scaffold protein] + N(6)-[(R)-dihydrolipoyl]-L-lysyl-[protein] + 4 Fe(3+) + 2 hydrogen sulfide + 2 5'-deoxyadenosine + 2 L-methionine + 2 reduced [2Fe-2S]-[ferredoxin]. It participates in protein modification; protein lipoylation via endogenous pathway; protein N(6)-(lipoyl)lysine from octanoyl-[acyl-carrier-protein]: step 2/2. Functionally, catalyzes the radical-mediated insertion of two sulfur atoms into the C-6 and C-8 positions of the octanoyl moiety bound to the lipoyl domains of lipoate-dependent enzymes, thereby converting the octanoylated domains into lipoylated derivatives. The polypeptide is Lipoyl synthase, mitochondrial (Nematostella vectensis (Starlet sea anemone)).